Here is a 460-residue protein sequence, read N- to C-terminus: Light-independent protochlorophyllide reductase subunit N (460 aa).

3 residues coordinate [4Fe-4S] cluster: C20, C45, and C105.

This sequence belongs to the BchN/ChlN family. In terms of assembly, protochlorophyllide reductase is composed of three subunits; ChlL, ChlN and ChlB. Forms a heterotetramer of two ChlB and two ChlN subunits. Requires [4Fe-4S] cluster as cofactor.

It is found in the plastid. The protein resides in the chloroplast. The enzyme catalyses chlorophyllide a + oxidized 2[4Fe-4S]-[ferredoxin] + 2 ADP + 2 phosphate = protochlorophyllide a + reduced 2[4Fe-4S]-[ferredoxin] + 2 ATP + 2 H2O. It functions in the pathway porphyrin-containing compound metabolism; chlorophyll biosynthesis (light-independent). In terms of biological role, component of the dark-operative protochlorophyllide reductase (DPOR) that uses Mg-ATP and reduced ferredoxin to reduce ring D of protochlorophyllide (Pchlide) to form chlorophyllide a (Chlide). This reaction is light-independent. The NB-protein (ChlN-ChlB) is the catalytic component of the complex. The chain is Light-independent protochlorophyllide reductase subunit N from Adiantum capillus-veneris (Maidenhair fern).